The following is a 356-amino-acid chain: Dual-specificity RNA methyltransferase RlmN (356 aa).

The Proton acceptor role is filled by Glu-89. Residues 108–341 enclose the Radical SAM core domain; the sequence is SHARYTICVS…CTIRESKGLD (234 aa). The cysteines at positions 115 and 346 are disulfide-linked. [4Fe-4S] cluster is bound by residues Cys-122, Cys-126, and Cys-129. S-adenosyl-L-methionine contacts are provided by residues 172–173, Ser-204, 227–229, and Asn-303; these read GE and SLH. Catalysis depends on Cys-346, which acts as the S-methylcysteine intermediate.

This sequence belongs to the radical SAM superfamily. RlmN family. [4Fe-4S] cluster is required as a cofactor.

It localises to the cytoplasm. The enzyme catalyses adenosine(2503) in 23S rRNA + 2 reduced [2Fe-2S]-[ferredoxin] + 2 S-adenosyl-L-methionine = 2-methyladenosine(2503) in 23S rRNA + 5'-deoxyadenosine + L-methionine + 2 oxidized [2Fe-2S]-[ferredoxin] + S-adenosyl-L-homocysteine. It catalyses the reaction adenosine(37) in tRNA + 2 reduced [2Fe-2S]-[ferredoxin] + 2 S-adenosyl-L-methionine = 2-methyladenosine(37) in tRNA + 5'-deoxyadenosine + L-methionine + 2 oxidized [2Fe-2S]-[ferredoxin] + S-adenosyl-L-homocysteine. Functionally, specifically methylates position 2 of adenine 2503 in 23S rRNA and position 2 of adenine 37 in tRNAs. m2A2503 modification seems to play a crucial role in the proofreading step occurring at the peptidyl transferase center and thus would serve to optimize ribosomal fidelity. This chain is Dual-specificity RNA methyltransferase RlmN, found in Campylobacter jejuni subsp. jejuni serotype O:2 (strain ATCC 700819 / NCTC 11168).